The chain runs to 304 residues: 17-beta-hydroxysteroid dehydrogenase 13 (304 aa).

The first 19 residues, 1 to 19 (MNLILEFLLLVGVIIYSYL), serve as a signal peptide directing secretion. Ser-33 is modified (phosphoserine). NAD(+) is bound at residue 40-67 (LITGAGHGIGRLTAYEFAKQKSRLVLWD). Lys-79 bears the N6-acetyllysine mark. Ser-172 is a binding site for substrate. Catalysis depends on Tyr-185, which acts as the Proton acceptor. Residue Lys-189 coordinates NAD(+). Residues 276–304 (SSKHPHGGSQQPVTPIPGDLTPSSDFLKH) are disordered.

Belongs to the short-chain dehydrogenases/reductases (SDR) family. As to expression, expressed predominantly in the liver (at protein level).

It localises to the lipid droplet. The protein resides in the endoplasmic reticulum. The enzyme catalyses 17beta-estradiol + NAD(+) = estrone + NADH + H(+). The catalysed reaction is all-trans-retinol + NAD(+) = all-trans-retinal + NADH + H(+). It carries out the reaction all-trans-retinal + NAD(+) + H2O = all-trans-retinoate + NADH + 2 H(+). Plays a pivotal role in hepatic lipid metabolism. In vitro, it catalyzes the oxidation of a variety of lipid substrates, including 17beta-estradiol, retinol, retinal, and leukotriene B4. The chain is 17-beta-hydroxysteroid dehydrogenase 13 (Hsd17b13) from Mus musculus (Mouse).